Reading from the N-terminus, the 203-residue chain is Peptide deformylase (203 aa).

Positions 121 and 163 each coordinate Fe cation. Residue Glu164 is part of the active site. Residue His167 participates in Fe cation binding.

It belongs to the polypeptide deformylase family. Requires Fe(2+) as cofactor.

It catalyses the reaction N-terminal N-formyl-L-methionyl-[peptide] + H2O = N-terminal L-methionyl-[peptide] + formate. Functionally, removes the formyl group from the N-terminal Met of newly synthesized proteins. Requires at least a dipeptide for an efficient rate of reaction. N-terminal L-methionine is a prerequisite for activity but the enzyme has broad specificity at other positions. The polypeptide is Peptide deformylase (Prochlorococcus marinus (strain MIT 9515)).